Reading from the N-terminus, the 128-residue chain is Large ribosomal subunit protein uL22 (128 aa).

Residues 1–22 (MARGHRSQIKRERNANKDTRPS) form a disordered region. Residues 9–21 (IKRERNANKDTRP) are compositionally biased toward basic and acidic residues.

Belongs to the universal ribosomal protein uL22 family. Part of the 50S ribosomal subunit.

Its function is as follows. This protein binds specifically to 23S rRNA; its binding is stimulated by other ribosomal proteins, e.g. L4, L17, and L20. It is important during the early stages of 50S assembly. It makes multiple contacts with different domains of the 23S rRNA in the assembled 50S subunit and ribosome. Functionally, the globular domain of the protein is located near the polypeptide exit tunnel on the outside of the subunit, while an extended beta-hairpin is found that lines the wall of the exit tunnel in the center of the 70S ribosome. The chain is Large ribosomal subunit protein uL22 from Lachnoclostridium phytofermentans (strain ATCC 700394 / DSM 18823 / ISDg) (Clostridium phytofermentans).